The following is a 424-amino-acid chain: Serine hydroxymethyltransferase (424 aa).

(6S)-5,6,7,8-tetrahydrofolate contacts are provided by residues Leu-119 and 123–125 (GHL). Lys-228 carries the post-translational modification N6-(pyridoxal phosphate)lysine. 353 to 355 (SAF) contacts (6S)-5,6,7,8-tetrahydrofolate.

Belongs to the SHMT family. In terms of assembly, homodimer. It depends on pyridoxal 5'-phosphate as a cofactor.

It localises to the cytoplasm. It carries out the reaction (6R)-5,10-methylene-5,6,7,8-tetrahydrofolate + glycine + H2O = (6S)-5,6,7,8-tetrahydrofolate + L-serine. It participates in one-carbon metabolism; tetrahydrofolate interconversion. It functions in the pathway amino-acid biosynthesis; glycine biosynthesis; glycine from L-serine: step 1/1. Its function is as follows. Catalyzes the reversible interconversion of serine and glycine with tetrahydrofolate (THF) serving as the one-carbon carrier. Also exhibits THF-independent aldolase activity toward beta-hydroxyamino acids, producing glycine and aldehydes, via a retro-aldol mechanism. This chain is Serine hydroxymethyltransferase, found in Natronomonas pharaonis (strain ATCC 35678 / DSM 2160 / CIP 103997 / JCM 8858 / NBRC 14720 / NCIMB 2260 / Gabara) (Halobacterium pharaonis).